Reading from the N-terminus, the 1170-residue chain is Error-prone DNA polymerase (1170 aa).

Disordered stretches follow at residues 867–899 (RGAR…LHND) and 1129–1170 (IPHG…RDFH). Residues 886-899 (PRNDNDRQIPLHND) are compositionally biased toward basic and acidic residues.

The protein belongs to the DNA polymerase type-C family. DnaE2 subfamily.

The protein localises to the cytoplasm. It carries out the reaction DNA(n) + a 2'-deoxyribonucleoside 5'-triphosphate = DNA(n+1) + diphosphate. Functionally, DNA polymerase involved in damage-induced mutagenesis and translesion synthesis (TLS). It is not the major replicative DNA polymerase. The chain is Error-prone DNA polymerase from Bradyrhizobium sp. (strain ORS 278).